Consider the following 227-residue polypeptide: ATP synthase subunit delta (227 aa).

Belongs to the ATPase delta chain family. In terms of assembly, F-type ATPases have 2 components, F(1) - the catalytic core - and F(0) - the membrane proton channel. F(1) has five subunits: alpha(3), beta(3), gamma(1), delta(1), epsilon(1). F(0) has three main subunits: a(1), b(2) and c(10-14). The alpha and beta chains form an alternating ring which encloses part of the gamma chain. F(1) is attached to F(0) by a central stalk formed by the gamma and epsilon chains, while a peripheral stalk is formed by the delta and b chains.

It is found in the cell inner membrane. Its function is as follows. F(1)F(0) ATP synthase produces ATP from ADP in the presence of a proton or sodium gradient. F-type ATPases consist of two structural domains, F(1) containing the extramembraneous catalytic core and F(0) containing the membrane proton channel, linked together by a central stalk and a peripheral stalk. During catalysis, ATP synthesis in the catalytic domain of F(1) is coupled via a rotary mechanism of the central stalk subunits to proton translocation. This protein is part of the stalk that links CF(0) to CF(1). It either transmits conformational changes from CF(0) to CF(1) or is implicated in proton conduction. This Rhodopirellula baltica (strain DSM 10527 / NCIMB 13988 / SH1) protein is ATP synthase subunit delta.